Here is a 126-residue protein sequence, read N- to C-terminus: Holo-[acyl-carrier-protein] synthase (126 aa).

Positions 9 and 58 each coordinate Mg(2+).

Belongs to the P-Pant transferase superfamily. AcpS family. Mg(2+) serves as cofactor.

It is found in the cytoplasm. It catalyses the reaction apo-[ACP] + CoA = holo-[ACP] + adenosine 3',5'-bisphosphate + H(+). In terms of biological role, transfers the 4'-phosphopantetheine moiety from coenzyme A to a Ser of acyl-carrier-protein. In Shewanella frigidimarina (strain NCIMB 400), this protein is Holo-[acyl-carrier-protein] synthase.